The chain runs to 362 residues: Chorismate synthase (362 aa).

NADP(+) contacts are provided by R48 and R54. FMN-binding positions include 131 to 133 (RSS), 243 to 244 (NA), G287, 302 to 306 (KPTSS), and R328.

Belongs to the chorismate synthase family. Homotetramer. The cofactor is FMNH2.

It carries out the reaction 5-O-(1-carboxyvinyl)-3-phosphoshikimate = chorismate + phosphate. Its pathway is metabolic intermediate biosynthesis; chorismate biosynthesis; chorismate from D-erythrose 4-phosphate and phosphoenolpyruvate: step 7/7. Its function is as follows. Catalyzes the anti-1,4-elimination of the C-3 phosphate and the C-6 proR hydrogen from 5-enolpyruvylshikimate-3-phosphate (EPSP) to yield chorismate, which is the branch point compound that serves as the starting substrate for the three terminal pathways of aromatic amino acid biosynthesis. This reaction introduces a second double bond into the aromatic ring system. The polypeptide is Chorismate synthase (Rhodopseudomonas palustris (strain TIE-1)).